Here is an 856-residue protein sequence, read N- to C-terminus: PR domain zinc finger protein 1 (856 aa).

The SET domain occupies 115–233; it reads PRNLLFKYAA…ANQELLVWYC (119 aa). 2 disordered regions span residues 357–399 and 532–571; these read THSP…APGL and GAAA…VMAA. Composition is skewed to low complexity over residues 373–393 and 542–556; these read SSPE…NTVS and SPPS…AATS. The segment at 558 to 605 is interaction with PIAS1; the sequence is HVVQPKATSSVMAAPSTDGAMNLIKNKRNMTGYKTLPYPLKKQNGKIK. C2H2-type zinc fingers lie at residues 606-628, 634-656, 662-684, and 690-712; these read YECN…LRVH, FKCQ…YLVH, HECQ…LRLH, and YQCK…KRLH. Residue Lys847 forms a Glycyl lysine isopeptide (Lys-Gly) (interchain with G-Cter in SUMO1); alternate linkage. Lys847 participates in a covalent cross-link: Glycyl lysine isopeptide (Lys-Gly) (interchain with G-Cter in SUMO2); alternate.

The protein belongs to the class V-like SAM-binding methyltransferase superfamily. As to quaternary structure, interacts with PRMT5. Interacts with FBXO10. Interacts with FBXO11. Interacts with multiple nuclear sumoylation E3 ligases, including CBX4, PIAS1, PIAS2, PIAS3, PIAS4, PML and RNF4, but not RANBP2. Interacts with LDB1, SMARCD3 and SMARCC1. Interacts with EEIG1; following TNFSF11/RANKL stimulation in bone marrow-derived macrophages, the interaction promotes the binding of PRDM1/BLIMP1 to the gene promoter of IRF8. Sumoylation at Lys-847 by PIAS1 increases transcriptional repressor activity, and is critical for plasma cell differentiation. Can be sumoylated with SUMO1 and SUMO2 by PML. Degradation of the wild-type protein mostly depends upon sumoylation, rather than ubiquitination. Desumoylated by SENP1 and SENP6. Post-translationally, ubiquitinated by SCF(FBXO11), leading to its degradation by the proteasome. Expressed in bone marrow macrophages (at protein level). Expressed in innate lymphocytes, including tissue-resident conventional natural killer (cNK) cells in liver. Expressed also weakly in tissue-resident natural killer (trNK) and natural killer T (NKT) cells in liver. As to expression, expressed in bone marrow, spleen and lymph node but not in brain, heart, kidney, liver, ovary or muscle. Weak expression detected in the lung. In terms of tissue distribution, expressed only in the yolk sac. Expressed in embryo, yolk sac, placenta, splenocytes, and activated T-cells.

The protein resides in the nucleus. It is found in the cytoplasm. Functionally, transcription factor that mediates a transcriptional program in various innate and adaptive immune tissue-resident lymphocyte T cell types such as tissue-resident memory T (Trm), natural killer (trNK) and natural killer T (NKT) cells and negatively regulates gene expression of proteins that promote the egress of tissue-resident T-cell populations from non-lymphoid organs. Plays a role in the development, retention and long-term establishment of adaptive and innate tissue-resident lymphocyte T cell types in non-lymphoid organs, such as the skin and gut, but also in other nonbarrier tissues like liver and kidney, and therefore may provide immediate immunological protection against reactivating infections or viral reinfection. Binds specifically to the PRDI element in the promoter of the beta-interferon gene. Drives the maturation of B-lymphocytes into Ig secreting cells. Associates with the transcriptional repressor ZNF683 to chromatin at gene promoter regions. Binds to the promoter and acts as a transcriptional repressor of IRF8, thereby promotes transcription of osteoclast differentiation factors such as NFATC1 and EEIG1. The polypeptide is PR domain zinc finger protein 1 (Prdm1) (Mus musculus (Mouse)).